The sequence spans 994 residues: Chloride channel protein E (994 aa).

Residues 1–33 (MTRKENEESESLSSSSSPIDNSNNNNNNNNHSI) are disordered. Over 1-163 (MTRKENEESE…HWLGKERIST (163 aa)) the chain is Cytoplasmic. Positions 11-32 (SLSSSSSPIDNSNNNNNNNNHS) are enriched in low complexity. A run of 11 helical transmembrane segments spans residues 164-184 (LLFI…CDFL), 227-247 (IVFV…ISFI), 271-291 (VLGF…SAAG), 300-320 (FMHA…FGAI), 334-354 (ALTS…LFAI), 362-382 (VMGN…IFFL), 410-430 (LITF…FVFI), 449-469 (IILV…AGPL), 505-525 (LLVF…LPIP), 527-547 (GAIT…GEIL), and 554-574 (QAIE…SGTI). The CBS 1 domain occupies 644 to 705 (MKKNINYLSM…LDIHIENIEQ (62 aa)). Disordered regions lie at residues 715–767 (FVNN…NSEN), 802–822 (IKPN…SDFE), and 846–872 (DENS…GDGI). Composition is skewed to low complexity over residues 717–764 (NNNN…NSNN) and 809–822 (SSSN…SDFE). A compositionally biased stretch (acidic residues) spans 859 to 870 (HDDEDDDEEEGD). The CBS 2 domain maps to 944–994 (MDLAPSQVPDLTPLNKVFHLFTMLGLGFTYVTSLGKLVGVITKNSLMEQDL).

It belongs to the chloride channel (TC 2.A.49) family.

It localises to the membrane. Voltage-gated chloride channel. Chloride channels may have several functions including the regulation of cell volume, membrane potential stabilization and signal transduction. The sequence is that of Chloride channel protein E (clcE) from Dictyostelium discoideum (Social amoeba).